A 194-amino-acid polypeptide reads, in one-letter code: Holliday junction branch migration complex subunit RuvA (194 aa).

A domain I region spans residues 1 to 64; it reads MIGRLRGILA…EDSVSLYGFL (64 aa). The tract at residues 65 to 140 is domain II; sequence REGERRLFRD…RAADFSSGAP (76 aa). The flexible linker stretch occupies residues 140–144; the sequence is PITGQ. Positions 145 to 194 are domain III; it reads LGPDAVSEATVALQQLGYKPAEAARMARDAGAEGDEVATVIRKALQAALR.

This sequence belongs to the RuvA family. In terms of assembly, homotetramer. Forms an RuvA(8)-RuvB(12)-Holliday junction (HJ) complex. HJ DNA is sandwiched between 2 RuvA tetramers; dsDNA enters through RuvA and exits via RuvB. An RuvB hexamer assembles on each DNA strand where it exits the tetramer. Each RuvB hexamer is contacted by two RuvA subunits (via domain III) on 2 adjacent RuvB subunits; this complex drives branch migration. In the full resolvosome a probable DNA-RuvA(4)-RuvB(12)-RuvC(2) complex forms which resolves the HJ.

The protein resides in the cytoplasm. In terms of biological role, the RuvA-RuvB-RuvC complex processes Holliday junction (HJ) DNA during genetic recombination and DNA repair, while the RuvA-RuvB complex plays an important role in the rescue of blocked DNA replication forks via replication fork reversal (RFR). RuvA specifically binds to HJ cruciform DNA, conferring on it an open structure. The RuvB hexamer acts as an ATP-dependent pump, pulling dsDNA into and through the RuvAB complex. HJ branch migration allows RuvC to scan DNA until it finds its consensus sequence, where it cleaves and resolves the cruciform DNA. The chain is Holliday junction branch migration complex subunit RuvA from Xanthomonas axonopodis pv. citri (strain 306).